The chain runs to 392 residues: Dual-specificity RNA methyltransferase RlmN (392 aa).

Glutamate 116 functions as the Proton acceptor in the catalytic mechanism. One can recognise a Radical SAM core domain in the interval 122-364; it reads EEGRGTLCVS…SPIRTPRGED (243 aa). An intrachain disulfide couples cysteine 129 to cysteine 369. Residues cysteine 136, cysteine 140, and cysteine 143 each coordinate [4Fe-4S] cluster. Residues 195–196, serine 227, 249–251, and asparagine 326 each bind S-adenosyl-L-methionine; these read GE and SFH. Cysteine 369 (S-methylcysteine intermediate) is an active-site residue.

The protein belongs to the radical SAM superfamily. RlmN family. Requires [4Fe-4S] cluster as cofactor.

The protein localises to the cytoplasm. The catalysed reaction is adenosine(2503) in 23S rRNA + 2 reduced [2Fe-2S]-[ferredoxin] + 2 S-adenosyl-L-methionine = 2-methyladenosine(2503) in 23S rRNA + 5'-deoxyadenosine + L-methionine + 2 oxidized [2Fe-2S]-[ferredoxin] + S-adenosyl-L-homocysteine. It carries out the reaction adenosine(37) in tRNA + 2 reduced [2Fe-2S]-[ferredoxin] + 2 S-adenosyl-L-methionine = 2-methyladenosine(37) in tRNA + 5'-deoxyadenosine + L-methionine + 2 oxidized [2Fe-2S]-[ferredoxin] + S-adenosyl-L-homocysteine. Its function is as follows. Specifically methylates position 2 of adenine 2503 in 23S rRNA and position 2 of adenine 37 in tRNAs. m2A2503 modification seems to play a crucial role in the proofreading step occurring at the peptidyl transferase center and thus would serve to optimize ribosomal fidelity. In Cereibacter sphaeroides (strain ATCC 17025 / ATH 2.4.3) (Rhodobacter sphaeroides), this protein is Dual-specificity RNA methyltransferase RlmN.